The primary structure comprises 183 residues: NAD(P)H-quinone oxidoreductase subunit J (183 aa).

The segment at 1–21 (MAEENAQEKQAPPSAGEQSEP) is disordered.

It belongs to the complex I 30 kDa subunit family. As to quaternary structure, NDH-1 can be composed of about 15 different subunits; different subcomplexes with different compositions have been identified which probably have different functions.

Its subcellular location is the cellular thylakoid membrane. The enzyme catalyses a plastoquinone + NADH + (n+1) H(+)(in) = a plastoquinol + NAD(+) + n H(+)(out). The catalysed reaction is a plastoquinone + NADPH + (n+1) H(+)(in) = a plastoquinol + NADP(+) + n H(+)(out). Functionally, NDH-1 shuttles electrons from an unknown electron donor, via FMN and iron-sulfur (Fe-S) centers, to quinones in the respiratory and/or the photosynthetic chain. The immediate electron acceptor for the enzyme in this species is believed to be plastoquinone. Couples the redox reaction to proton translocation, and thus conserves the redox energy in a proton gradient. Cyanobacterial NDH-1 also plays a role in inorganic carbon-concentration. The protein is NAD(P)H-quinone oxidoreductase subunit J of Synechococcus sp. (strain JA-2-3B'a(2-13)) (Cyanobacteria bacterium Yellowstone B-Prime).